The sequence spans 125 residues: Large ribosomal subunit protein eL31 (125 aa).

The protein belongs to the eukaryotic ribosomal protein eL31 family. In terms of assembly, component of the large ribosomal subunit.

The protein resides in the cytoplasm. Component of the large ribosomal subunit. The ribosome is a large ribonucleoprotein complex responsible for the synthesis of proteins in the cell. The sequence is that of Large ribosomal subunit protein eL31 (rpl31) from Ictalurus punctatus (Channel catfish).